Consider the following 140-residue polypeptide: Lysozyme E (140 aa).

Residues 1–18 form the signal peptide; that stretch reads MKAFIVLVALAMAAPALG. In terms of domain architecture, C-type lysozyme spans 19–140; it reads RTLDRCSLAR…GWLPSIDGCF (122 aa). 4 disulfides stabilise this stretch: C24/C139, C45/C129, C80/C96, and C92/C110. Active-site residues include E50 and D68.

The protein belongs to the glycosyl hydrolase 22 family. Found in the midgut.

The enzyme catalyses Hydrolysis of (1-&gt;4)-beta-linkages between N-acetylmuramic acid and N-acetyl-D-glucosamine residues in a peptidoglycan and between N-acetyl-D-glucosamine residues in chitodextrins.. Functionally, unlikely to play an active role in the humoral immune defense. May have a function in the digestion of bacteria in the food. In Drosophila melanogaster (Fruit fly), this protein is Lysozyme E (LysE).